Reading from the N-terminus, the 167-residue chain is MSVLKILHYPDQRLRLIAKPVEKITKEIYKITNNMIDTMYQEEGIGLAATQVNIQLQIIVIHKIHAIEKNLILINPKIIEKKGSISIEEGCLSIPEYRAFVPRFNYIKIQAINLNGNTVEIEADSILSICIQHEIDHLNGKLFIDYLSELKRERILKKLIKLKKRIK.

Fe cation is bound by residues Cys91 and His133. Glu134 is a catalytic residue. His137 contacts Fe cation.

Belongs to the polypeptide deformylase family. Requires Fe(2+) as cofactor.

The enzyme catalyses N-terminal N-formyl-L-methionyl-[peptide] + H2O = N-terminal L-methionyl-[peptide] + formate. Removes the formyl group from the N-terminal Met of newly synthesized proteins. Requires at least a dipeptide for an efficient rate of reaction. N-terminal L-methionine is a prerequisite for activity but the enzyme has broad specificity at other positions. This is Peptide deformylase from Buchnera aphidicola subsp. Schizaphis graminum (strain Sg).